The following is a 932-amino-acid chain: MGLTPMMRQYLEVKESCKDCILFFRLGDFYEMFFEDAKVASKELELVLTGRDCGLEERAPMCGIPYHAANTYIGRLVSAGYKIAICEQLEDPSASKGIVKRGIIKIITPGTYTDSSFLEENKNNYIMSFYLDDNMCAMSFADISTGEFNSTHSNFKEAVVLDEISKFAPREIVLEENIKESFIHTIKERFPNISISKIKEENFDYNIDNNLKEQFNNFNENEYETIVKKSANGLLYYIFHTQKNILSNINKIDYYSIVDYLTIDVNSRRNLEITENLREKTKKGSLLWVLDKTNTAMGGRQLRRWIEQPLINKNPIENRLNAVEELLNNISLQEDLKEDLKSIYDIERIVGKVASKSVNAKELISLKCSIGKVPYIKKYLSNFKSDLFLNMEQCIDTLEDIHKLLDKALLDNPSLSVKEGNIIKEGFNEEVDSLREAKSNGKKWIASLEQKEKEETGIKSLKVSYNKVFGYFIEITKANLNLVPEGRYIRKQTLSNAERYITPELKEMEEKILGAEEKLIDIEYKLFTKIRDFIEENIDRMQKTARIISDIDCLCSLATVALENNYIKPNINAKNEILIEEGRHPVVEKVIPKGEFISNDSLIDTKENQLILITGPNMAGKSTYMRQVALITIMAQIGSFVPAKKANISICDKIFTRIGASDDLAAGKSTFMVEMWEVSNILKNATSKSLVLLDEVGRGTSTYDGLSIAWSVIEYICNNKNLRCKTLFATHYHELTKLEDNIEGVKNYSVSVSELENEIVFLRKIIRGGADQSYGIEVAKLAGLPSPVINRAKEILQHIEGDKEENSLNITPSKEYKSKDYIEASKDTLNTKNNLESEIKHDTLSETNAATIVEDESTKEHLSSNKKQINCRINDEKSIKKEVAVDSFQINFEYIKRDKIIEEIKNIDILNMTPMEGFNKLYDIINKTKDID.

615-622 (GPNMAGKS) serves as a coordination point for ATP.

The protein belongs to the DNA mismatch repair MutS family.

This protein is involved in the repair of mismatches in DNA. It is possible that it carries out the mismatch recognition step. This protein has a weak ATPase activity. The chain is DNA mismatch repair protein MutS from Clostridium botulinum (strain Okra / Type B1).